Here is a 197-residue protein sequence, read N- to C-terminus: Baseplate puncturing device gp45 (197 aa).

The disordered stretch occupies residues 172-197 (DAIINGKSTDKHIHRGDSGGTTGPMQ). Residues 179–188 (STDKHIHRGD) are compositionally biased toward basic and acidic residues. His-183 and His-185 together coordinate Fe cation. Residues Asp-188 and Ser-189 each coordinate Ca(2+). Chloride is bound at residue Asp-188.

As to quaternary structure, homotrimer. Part of a complex composed of three DNA circularization protein N, three baseplate hub protein gp44 and three sub-complex wedge (made of two copies of each baseplate protein gp46, gp47 and gp48) that forms the baseplate. Ca(2+) serves as cofactor. It depends on chloride as a cofactor. The cofactor is Fe cation.

The protein resides in the virion. Its subcellular location is the host cytoplasm. Functionally, component of the baseplate that forms a central needlelike spike used to puncture the host cell membrane for tube insertion during virus entry. Probably involved in baseplate and tail assembly. Serves as the distal plug of tail tube channel and might regulate the process of the phage DNA and protein ejection into the host cell. This chain is Baseplate puncturing device gp45, found in Escherichia phage Mu (Bacteriophage Mu).